The following is a 226-amino-acid chain: MKVLILRPAELLSETIRRFREEGFDAYGCPFIKLIYTDFDVPEHDFAIVTSQNAARVLRERGVRLKRVIAIGKKTAELIEAEEVLLPSKFDSETLYEEFAEMLRGKRVVAFRSNAGSEAVKRLSEVADFREIQVYRIEKLQGEEQRREVEKVREGFYDAIVFSSSMIARSLLELCDEKCLEALKNIFVVAIGPPTAKVLAEKGIRAEIPEEYTFDGVIELLKSKKM.

Belongs to the uroporphyrinogen-III synthase family.

It catalyses the reaction hydroxymethylbilane = uroporphyrinogen III + H2O. It functions in the pathway porphyrin-containing compound metabolism; protoporphyrin-IX biosynthesis; coproporphyrinogen-III from 5-aminolevulinate: step 3/4. Catalyzes cyclization of the linear tetrapyrrole, hydroxymethylbilane, to the macrocyclic uroporphyrinogen III. In Archaeoglobus fulgidus (strain ATCC 49558 / DSM 4304 / JCM 9628 / NBRC 100126 / VC-16), this protein is Putative uroporphyrinogen-III synthase.